Reading from the N-terminus, the 236-residue chain is Activating transcription factor of chaperone (236 aa).

Residues His117–Lys185 are disordered. Low complexity predominate over residues Ser120–Arg137. Residues Arg162–Asn175 show a composition bias toward basic and acidic residues. The bZIP domain occupies Asp165–Leu228. Positions Arg167–Lys187 are basic motif. The interval Leu193–Leu228 is leucine-zipper.

The protein belongs to the bZIP family. In terms of assembly, binds DNA as a dimer.

Its subcellular location is the nucleus. Transcriptional activator that acts in the unfolded protein response (UPR) pathway. Acts during endoplasmic reticulum (ER) stress by activating UPR target genes via direct binding to the UPR element (UPRE) (5'-GGAACTGGACAGCGTGTCGAAA-3'). Activates expression of ER chaperones ERP72 and PDI. In Bombyx mori (Silk moth), this protein is Activating transcription factor of chaperone.